The following is a 490-amino-acid chain: Kinetochore protein Nuf2 homolog (490 aa).

Coiled-coil stretches lie at residues 146-280 (DRKF…KLEA) and 310-407 (DLID…SETI). Disordered stretches follow at residues 346–365 (QSET…EERQ) and 468–490 (IDAG…SVFK).

It belongs to the NUF2 family. Component of the NDC80 complex, which is composed of at least ndc-80 and him-10. The NDC80 complex interacts with knl-1.

The protein localises to the nucleus. The protein resides in the chromosome. Its subcellular location is the centromere. It is found in the kinetochore. Its function is as follows. Acts as a component of the essential kinetochore-associated NDC80 complex, which is required for chromosome segregation in mitosis and meiosis and spindle checkpoint activity. The ndc-80 complex synergistically enhances the affinity of the ska-1 complex for microtubules and may allow the ndc-80 complex to track depolymerizing microtubules. This Caenorhabditis elegans protein is Kinetochore protein Nuf2 homolog (him-10).